A 95-amino-acid polypeptide reads, in one-letter code: Small ribosomal subunit protein mS37 (95 aa).

In terms of domain architecture, CHCH spans 27–69 (ANRCLVLMSNLLQCWSSNGHMNPVCEKLATDLKACTSQNVMGS). 2 consecutive short sequence motifs (cx9C motif) follow at residues 30 to 40 (CLVLMSNLLQC) and 51 to 61 (CEKLATDLKAC). Cystine bridges form between cysteine 30/cysteine 61 and cysteine 40/cysteine 51.

This sequence belongs to the mitochondrion-specific ribosomal protein mS37 family. Component of the mitochondrial small ribosomal subunit.

The protein resides in the mitochondrion. Involved in mitochondrial genome encoded proteins translation. The polypeptide is Small ribosomal subunit protein mS37 (MRP10) (Eremothecium gossypii (strain ATCC 10895 / CBS 109.51 / FGSC 9923 / NRRL Y-1056) (Yeast)).